Here is a 100-residue protein sequence, read N- to C-terminus: Urease subunit gamma (100 aa).

It belongs to the urease gamma subunit family. Heterotrimer of UreA (gamma), UreB (beta) and UreC (alpha) subunits. Three heterotrimers associate to form the active enzyme.

It localises to the cytoplasm. It catalyses the reaction urea + 2 H2O + H(+) = hydrogencarbonate + 2 NH4(+). The protein operates within nitrogen metabolism; urea degradation; CO(2) and NH(3) from urea (urease route): step 1/1. The protein is Urease subunit gamma of Synechococcus sp. (strain RCC307).